The sequence spans 138 residues: MRIMGLDVGSKTVGVAISDPLGWTAQGVETIQIDENRKQFGYDRVKELVLEYEVEKVVVGLPKNMNNTIGPRAESSKIYAEVLEARIGLPVVLWDERLTTSAAERTLIEADVSRKKRKEVIDKLAAVMILQSYLDTTN.

It belongs to the YqgF nuclease family.

It is found in the cytoplasm. Its function is as follows. Could be a nuclease involved in processing of the 5'-end of pre-16S rRNA. The protein is Putative pre-16S rRNA nuclease of Listeria monocytogenes serovar 1/2a (strain ATCC BAA-679 / EGD-e).